A 76-amino-acid chain; its full sequence is U-scoloptoxin(13)-Sa1a (76 aa).

Positions 1-22 (MAYIFALIFAFVVCINTDVIQA) are cleaved as a signal peptide.

It belongs to the scoloptoxin-13 family. In terms of processing, contains 4 disulfide bonds. Expressed by the venom gland.

It is found in the secreted. This is U-scoloptoxin(13)-Sa1a from Scolopendra alternans (Florida Keys giant centipede).